The primary structure comprises 121 residues: Large ribosomal subunit protein bL20 (121 aa).

The protein belongs to the bacterial ribosomal protein bL20 family.

Its function is as follows. Binds directly to 23S ribosomal RNA and is necessary for the in vitro assembly process of the 50S ribosomal subunit. It is not involved in the protein synthesizing functions of that subunit. The polypeptide is Large ribosomal subunit protein bL20 (Dinoroseobacter shibae (strain DSM 16493 / NCIMB 14021 / DFL 12)).